Consider the following 422-residue polypeptide: Probable glucuronosyltransferase Os01g0926400 (422 aa).

The Cytoplasmic portion of the chain corresponds to 1 to 8 (MGTRPCAG). Residues 9 to 29 (VASAVAAAVAVLLLAVSCFAA) form a helical; Signal-anchor for type II membrane protein membrane-spanning segment. Residues 30–422 (AATTTQKHGR…QGLENDLKPW (393 aa)) are Lumenal-facing. Residue N149 is glycosylated (N-linked (GlcNAc...) asparagine).

Belongs to the glycosyltransferase 47 family.

It is found in the golgi apparatus membrane. Involved in the synthesis of glucuronoxylan hemicellulose in secondary cell walls. The sequence is that of Probable glucuronosyltransferase Os01g0926400 from Oryza sativa subsp. japonica (Rice).